We begin with the raw amino-acid sequence, 105 residues long: Large ribosomal subunit protein bL21 (105 aa).

It belongs to the bacterial ribosomal protein bL21 family. As to quaternary structure, part of the 50S ribosomal subunit. Contacts protein L20.

Its function is as follows. This protein binds to 23S rRNA in the presence of protein L20. The sequence is that of Large ribosomal subunit protein bL21 from Aliarcobacter butzleri (strain RM4018) (Arcobacter butzleri).